An 89-amino-acid chain; its full sequence is Signal recognition particle 19 kDa protein (89 aa).

The protein belongs to the SRP19 family. Part of the signal recognition particle protein translocation system, which is composed of SRP and FtsY. Archaeal SRP consists of a 7S RNA molecule of 300 nucleotides and two protein subunits: SRP54 and SRP19.

Its subcellular location is the cytoplasm. Functionally, involved in targeting and insertion of nascent membrane proteins into the cytoplasmic membrane. Binds directly to 7S RNA and mediates binding of the 54 kDa subunit of the SRP. This is Signal recognition particle 19 kDa protein from Methanococcus maripaludis (strain DSM 14266 / JCM 13030 / NBRC 101832 / S2 / LL).